The primary structure comprises 75 residues: F1845 fimbrial adhesin operon regulatory protein DaaF (75 aa).

May have a possible regulatory function on the expression of the other daa genes. The protein is F1845 fimbrial adhesin operon regulatory protein DaaF (daaF) of Escherichia coli.